We begin with the raw amino-acid sequence, 351 residues long: MQRALPGARQHLGAILASASVVVKALCAAVLFLYLLSFAVDTGCLAVTPGYLFPPNFWIWTLATHGLMEQHVWDVAISLTTVVVAGRLLEPLWGALELLIFFSVVNVSVGLLGAFAYLLTYMASFNLVYLFTVRIHGALGFLGGVLVALKQTMGDCVVLRVPQVRVSVMPMLLLALLLLLRLATLLQSPALASYGFGLLSSWVYLRFYQRHSRGRGDMADHFAFATFFPEILQPVVGLLANLVHSLLVKVKICQKTVKRYDVGAPSSITISLPGTDPQDAERRRQLALKALNERLKRVEDQSIWPSMDDDEEESGAKVDSPLPSDKAPTPPGKGAAPESSLITFEAAPPTL.

Residues 1–19 (MQRALPGARQHLGAILASA) lie on the Cytoplasmic side of the membrane. A mediates homooligomerization region spans residues 1-205 (MQRALPGARQ…FGLLSSWVYL (205 aa)). A helical membrane pass occupies residues 20-40 (SVVVKALCAAVLFLYLLSFAV). The Lumenal segment spans residues 41-97 (DTGCLAVTPGYLFPPNFWIWTLATHGLMEQHVWDVAISLTTVVVAGRLLEPLWGALE). The helical transmembrane segment at 98–118 (LLIFFSVVNVSVGLLGAFAYL) threads the bilayer. Residues 119–126 (LTYMASFN) are Cytoplasmic-facing. Residues 127-147 (LVYLFTVRIHGALGFLGGVLV) traverse the membrane as a helical segment. Topologically, residues 148-165 (ALKQTMGDCVVLRVPQVR) are lumenal. Residues 166–186 (VSVMPMLLLALLLLLRLATLL) form a helical membrane-spanning segment. The Cytoplasmic portion of the chain corresponds to 187–351 (QSPALASYGF…ITFEAAPPTL (165 aa)). The mediates localization to the Golgi stretch occupies residues 206-229 (RFYQRHSRGRGDMADHFAFATFFP). Residues 301-351 (QSIWPSMDDDEEESGAKVDSPLPSDKAPTPPGKGAAPESSLITFEAAPPTL) form a disordered region. Residue threonine 329 is modified to Phosphothreonine.

It belongs to the TMEM115 family. In terms of assembly, homooligomer. Interacts with COPB1. May interact with LMAN1. Interacts with the COG complex; probably through COG3. In terms of tissue distribution, expressed strongly in kidney and skeletal muscle, followed by liver, placenta, pancreas, and lung, with low amounts in heart and only traces in brain. Widely expressed with ubiquitous expression in epithelial tissues (at protein level).

Its subcellular location is the golgi apparatus. The protein localises to the golgi stack membrane. Its function is as follows. May play a role in retrograde transport of proteins from the Golgi to the endoplasmic reticulum. May indirectly play a role in protein glycosylation in the Golgi. The protein is Transmembrane protein 115 of Homo sapiens (Human).